Reading from the N-terminus, the 842-residue chain is ATP-binding cassette sub-family B member 6 (842 aa).

Topologically, residues 1–26 (MVTVGNYCEAEGPLGPAWAQNGLSPC) are lumenal. The interval 1 to 205 (MVTVGNYCEA…SGGLFILGLW (205 aa)) is required for the lysosomal targeting. A required for ATPase activity region spans residues 1 to 236 (MVTVGNYCEA…RNQAQSTDRT (236 aa)). A disulfide bridge connects residues Cys8 and Cys26. Residues 27–47 (FFFTLVPSTLMALGALALVLV) traverse the membrane as a helical segment. Over 48-72 (LPCRRRDVPSGTEELFWAADSRVAP) the chain is Cytoplasmic. A helical transmembrane segment spans residues 73-93 (YALQLFLATLQVALPLAGLAG). At 94–106 (RVGTARGVRLPGY) the chain is on the lumenal side. A helical transmembrane segment spans residues 107–127 (LLLASMLGSLASACGLWLLVA). The Cytoplasmic segment spans residues 128-147 (ERRQARQSLAMGVWMKFRHS). A helical transmembrane segment spans residues 148–168 (SGLLLLWTVAFAAENLALVSW). Over 169–185 (NSPQWWWARADLGQQVQ) the chain is Lumenal. A helical transmembrane segment spans residues 186–206 (FGLWVLRYVISGGLFILGLWA). The Cytoplasmic segment spans residues 207–263 (PGLRPQSYTLRVHEADQDVERNQAQSTDRTSTWRDLGRKLRLLSSYLWPRGSPALQF). Residues 264–284 (IVLICLGLMGLDRALNVLVPI) traverse the membrane as a helical segment. The 292-residue stretch at 265 to 556 (VLICLGLMGL…FGTYYRMIQT (292 aa)) folds into the ABC transmembrane type-1 domain. The Lumenal segment spans residues 285–305 (FYRDIVNLLTSKAPWSSLAWT). Residues 306–326 (VTTYVFLKFLQGGGTGSTGFV) traverse the membrane as a helical segment. The Cytoplasmic portion of the chain corresponds to 327–375 (SNLRTFLWIRVQQFTSRGVELRLFSHLHELSLRWHLGRRTGEVLRVVDR). Residues 376-396 (GTSSVTGLLSYLVFNIIPTLA) traverse the membrane as a helical segment. Residue Asp397 is a topological domain, lumenal. Residues 398 to 418 (IIIGIIYFSMFFNAWFGLIVF) traverse the membrane as a helical segment. At 419–499 (LCMSLYLFLT…SSASLVVLNQ (81 aa)) the chain is on the cytoplasmic side. Residues 500–520 (TQNLVIGLGLLAGSLLCAYFV) form a helical membrane-spanning segment. The Lumenal portion of the chain corresponds to 521–529 (SEQKLQVGD). Residues 530–550 (FVLFGTYITQLYMPLNWFGTY) traverse the membrane as a helical segment. Over 551–842 (YRMIQTNFID…SEDSKPQDIA (292 aa)) the chain is Cytoplasmic. One can recognise an ABC transporter domain in the interval 590-824 (IEFENVHFSY…GGVYAEMWQL (235 aa)). 623 to 630 (GPSGAGKS) contributes to the ATP binding site.

This sequence belongs to the ABC transporter superfamily. ABCB family. Heavy Metal importer (TC 3.A.1.210) subfamily. As to quaternary structure, homodimer. N-glycosylated. Highly expressed in the liver, adrenal glands, and testis.

It localises to the cell membrane. It is found in the mitochondrion outer membrane. The protein localises to the endoplasmic reticulum membrane. The protein resides in the golgi apparatus membrane. Its subcellular location is the endosome membrane. It localises to the lysosome membrane. It is found in the late endosome membrane. The protein localises to the early endosome membrane. The protein resides in the secreted. Its subcellular location is the extracellular exosome. It localises to the mitochondrion. It is found in the endosome. The protein localises to the multivesicular body membrane. The protein resides in the melanosome membrane. The enzyme catalyses heme b(in) + ATP + H2O = heme b(out) + ADP + phosphate + H(+). It carries out the reaction coproporphyrin III(in) + ATP + H2O = coproporphyrin III(out) + ADP + phosphate + H(+). The catalysed reaction is pheophorbide a(in) + ATP + H2O = pheophorbide a(out) + ADP + phosphate + H(+). It catalyses the reaction coproporphyrinogen III(in) + ATP + H2O = coproporphyrinogen III(out) + ADP + phosphate + H(+). The enzyme catalyses protoporphyrin IX(in) + ATP + H2O = protoporphyrin IX(out) + ADP + phosphate + H(+). It carries out the reaction coproporphyrin I(in) + ATP + H2O = coproporphyrin I(out) + ADP + phosphate + H(+). The catalysed reaction is uroporphyrin I(in) + ATP + H2O = uroporphyrin I(out) + ADP + phosphate + H(+). It catalyses the reaction uroporphyrin III(in) + ATP + H2O = uroporphyrin III(out) + ADP + phosphate + H(+). In terms of biological role, ATP-dependent transporter that catalyzes the transport of a broad-spectrum of porphyrins from the cytoplasm to the extracellular space through the plasma membrane or into the vesicle lumen. May also function as an ATP-dependent importer of porphyrins from the cytoplasm into the mitochondria, in turn may participate in the de novo heme biosynthesis regulation and in the coordination of heme and iron homeostasis during phenylhydrazine stress. May also play a key role in the early steps of melanogenesis producing PMEL amyloid fibrils. In vitro, it confers to cells a resistance to toxic metal such as arsenic and cadmium and against chemotherapeutics agent such as 5-fluorouracil, SN-38 and vincristin. In addition may play a role in the transition metal homeostasis. The polypeptide is ATP-binding cassette sub-family B member 6 (Mesocricetus auratus (Golden hamster)).